Here is a 410-residue protein sequence, read N- to C-terminus: Multifunctional CCA protein (410 aa).

ATP is bound by residues Gly-8 and Arg-11. Residues Gly-8 and Arg-11 each contribute to the CTP site. Asp-21 and Asp-23 together coordinate Mg(2+). Arg-91, Arg-137, and Arg-140 together coordinate ATP. Positions 91, 137, and 140 each coordinate CTP. In terms of domain architecture, HD spans 228–329 (TGVHVLSVLQ…LELLQSFDVY (102 aa)).

It belongs to the tRNA nucleotidyltransferase/poly(A) polymerase family. Bacterial CCA-adding enzyme type 1 subfamily. In terms of assembly, monomer. Can also form homodimers and oligomers. The cofactor is Mg(2+). Requires Ni(2+) as cofactor.

The catalysed reaction is a tRNA precursor + 2 CTP + ATP = a tRNA with a 3' CCA end + 3 diphosphate. It carries out the reaction a tRNA with a 3' CCA end + 2 CTP + ATP = a tRNA with a 3' CCACCA end + 3 diphosphate. Functionally, catalyzes the addition and repair of the essential 3'-terminal CCA sequence in tRNAs without using a nucleic acid template. Adds these three nucleotides in the order of C, C, and A to the tRNA nucleotide-73, using CTP and ATP as substrates and producing inorganic pyrophosphate. tRNA 3'-terminal CCA addition is required both for tRNA processing and repair. Also involved in tRNA surveillance by mediating tandem CCA addition to generate a CCACCA at the 3' terminus of unstable tRNAs. While stable tRNAs receive only 3'-terminal CCA, unstable tRNAs are marked with CCACCA and rapidly degraded. This Pseudomonas aeruginosa (strain LESB58) protein is Multifunctional CCA protein.